Reading from the N-terminus, the 302-residue chain is Bifunctional protein FolD (302 aa).

NADP(+)-binding positions include 165 to 167 (GRS), serine 190, and isoleucine 231.

The protein belongs to the tetrahydrofolate dehydrogenase/cyclohydrolase family. As to quaternary structure, homodimer.

The catalysed reaction is (6R)-5,10-methylene-5,6,7,8-tetrahydrofolate + NADP(+) = (6R)-5,10-methenyltetrahydrofolate + NADPH. The enzyme catalyses (6R)-5,10-methenyltetrahydrofolate + H2O = (6R)-10-formyltetrahydrofolate + H(+). It participates in one-carbon metabolism; tetrahydrofolate interconversion. In terms of biological role, catalyzes the oxidation of 5,10-methylenetetrahydrofolate to 5,10-methenyltetrahydrofolate and then the hydrolysis of 5,10-methenyltetrahydrofolate to 10-formyltetrahydrofolate. This Prochlorococcus marinus (strain SARG / CCMP1375 / SS120) protein is Bifunctional protein FolD.